A 712-amino-acid polypeptide reads, in one-letter code: Probable metal-nicotianamine transporter YSL11 (712 aa).

A disordered region spans residues 25 to 48 (RRNTTAAARGNAGEEEEEAEAVAP). A run of 14 helical transmembrane segments spans residues 70 to 90 (AFVVGFLLSIMFNIIVMKLSL), 93 to 113 (GVIPSLNVSASLLGFFLVRLW), 138 to 158 (CVVSAYGVAFSGGFGSYLFGM), 180 to 200 (LGWIIGFMFLVSFVGLFALVP), 242 to 262 (LGKYFSISFLWAFFQWFYTAG), 300 to 320 (IVNVSLLIGGIISWGIMWPLI), 345 to 365 (VFITIAVILGDGLYNFVKVFG), 418 to 438 (VAIGGYVVLAVITSGCLPLII), 446 to 466 (ILIAYIFAPIMAFCNAYGSGL), 478 to 498 (LAIFVFGAWAGASHGGVLVGL), 532 to 552 (FVSQVIGTAMGCVIAPCVFWL), 593 to 613 (LTLCYIAFVAAFIINLIKDLV), 631 to 651 (FYLGPYFAIDMFMGSVILYFW), and 666 to 686 (VASGLMCGDGLWALPQAVLSL).

Belongs to the YSL (TC 2.A.67.2) family.

The protein resides in the membrane. In terms of biological role, may be involved in the transport of nicotianamine-chelated metals. In Oryza sativa subsp. japonica (Rice), this protein is Probable metal-nicotianamine transporter YSL11 (YSL11).